Here is a 166-residue protein sequence, read N- to C-terminus: Small ribosomal subunit protein uS5 (166 aa).

Positions 11-74 (LQEKLIAVNR…EKARRNMMNV (64 aa)) constitute an S5 DRBM domain.

Belongs to the universal ribosomal protein uS5 family. As to quaternary structure, part of the 30S ribosomal subunit. Contacts proteins S4 and S8.

With S4 and S12 plays an important role in translational accuracy. Functionally, located at the back of the 30S subunit body where it stabilizes the conformation of the head with respect to the body. The protein is Small ribosomal subunit protein uS5 of Buchnera aphidicola subsp. Acyrthosiphon kondoi (Acyrthosiphon kondoi symbiotic bacterium).